Consider the following 320-residue polypeptide: Glucosaminate ammonia-lyase (320 aa).

36-43 (TGMQAGGQ) contributes to the FAD binding site. A disulfide bond links Cys136 and Cys139. 285 to 294 (DVADHVYRQA) serves as a coordination point for FAD.

Belongs to the class-II pyridine nucleotide-disulfide oxidoreductase family.

It carries out the reaction 2-amino-2-deoxy-D-gluconate = 2-dehydro-3-deoxy-D-gluconate + NH4(+). In terms of biological role, catalyzes the conversion of 2-amino-2-deoxy-D-gluconate (GlcNA) to 2-keto-3-deoxy-D-gluconic acid (KDGA) and ammonia. This Pseudomonas fluorescens protein is Glucosaminate ammonia-lyase.